The primary structure comprises 185 residues: Lysozyme g (185 aa).

The active site involves Glu73.

This sequence belongs to the glycosyl hydrolase 23 family.

It catalyses the reaction Hydrolysis of (1-&gt;4)-beta-linkages between N-acetylmuramic acid and N-acetyl-D-glucosamine residues in a peptidoglycan and between N-acetyl-D-glucosamine residues in chitodextrins.. This is Lysozyme g from Cyprinus carpio (Common carp).